The sequence spans 103 residues: Large ribosomal subunit protein uL23 (103 aa).

The protein belongs to the universal ribosomal protein uL23 family. As to quaternary structure, part of the 50S ribosomal subunit. Contacts protein L29, and trigger factor when it is bound to the ribosome.

Functionally, one of the early assembly proteins it binds 23S rRNA. One of the proteins that surrounds the polypeptide exit tunnel on the outside of the ribosome. Forms the main docking site for trigger factor binding to the ribosome. The protein is Large ribosomal subunit protein uL23 of Chlorobium phaeovibrioides (strain DSM 265 / 1930) (Prosthecochloris vibrioformis (strain DSM 265)).